The chain runs to 419 residues: UDP-N-acetylglucosamine 1-carboxyvinyltransferase (419 aa).

22-23 serves as a coordination point for phosphoenolpyruvate; sequence KN. UDP-N-acetyl-alpha-D-glucosamine is bound at residue arginine 95. Cysteine 119 functions as the Proton donor in the catalytic mechanism. Position 119 is a 2-(S-cysteinyl)pyruvic acid O-phosphothioketal (cysteine 119). UDP-N-acetyl-alpha-D-glucosamine contacts are provided by residues 164–167, aspartate 308, and isoleucine 330; that span reads KVSV.

The protein belongs to the EPSP synthase family. MurA subfamily.

Its subcellular location is the cytoplasm. The catalysed reaction is phosphoenolpyruvate + UDP-N-acetyl-alpha-D-glucosamine = UDP-N-acetyl-3-O-(1-carboxyvinyl)-alpha-D-glucosamine + phosphate. It functions in the pathway cell wall biogenesis; peptidoglycan biosynthesis. In terms of biological role, cell wall formation. Adds enolpyruvyl to UDP-N-acetylglucosamine. The sequence is that of UDP-N-acetylglucosamine 1-carboxyvinyltransferase from Rickettsia africae (strain ESF-5).